The primary structure comprises 178 residues: MAELTTLARPYAKAAFEYAQAHQQLADWSAALGVLAAVSQDDTVRQLLKEPQLTSSAKAQSLIDVCGDKLNAPAQNFVRTVAENKRLELLPTIAEMYEQLKAEQEKSVEVEVTSAFTLSKEQQDKLAKALSARLSREVRLHASEDASLIGGVIIRAGDLVIDGSVRGKLAKLAEALKS.

It belongs to the ATPase delta chain family. In terms of assembly, F-type ATPases have 2 components, F(1) - the catalytic core - and F(0) - the membrane proton channel. F(1) has five subunits: alpha(3), beta(3), gamma(1), delta(1), epsilon(1). F(0) has three main subunits: a(1), b(2) and c(10-14). The alpha and beta chains form an alternating ring which encloses part of the gamma chain. F(1) is attached to F(0) by a central stalk formed by the gamma and epsilon chains, while a peripheral stalk is formed by the delta and b chains.

It localises to the cell inner membrane. F(1)F(0) ATP synthase produces ATP from ADP in the presence of a proton or sodium gradient. F-type ATPases consist of two structural domains, F(1) containing the extramembraneous catalytic core and F(0) containing the membrane proton channel, linked together by a central stalk and a peripheral stalk. During catalysis, ATP synthesis in the catalytic domain of F(1) is coupled via a rotary mechanism of the central stalk subunits to proton translocation. In terms of biological role, this protein is part of the stalk that links CF(0) to CF(1). It either transmits conformational changes from CF(0) to CF(1) or is implicated in proton conduction. This Pseudomonas aeruginosa (strain UCBPP-PA14) protein is ATP synthase subunit delta.